The chain runs to 242 residues: uncharacterized protein (242 aa).

The S4 RNA-binding domain maps to 2–62 (EKAYKLLSVQ…VEKPSVIFED (61 aa)). D93 is a catalytic residue.

The protein belongs to the pseudouridine synthase RluA family.

The catalysed reaction is a uridine in RNA = a pseudouridine in RNA. This is an uncharacterized protein from Helicobacter pylori (strain J99 / ATCC 700824) (Campylobacter pylori J99).